The following is an 831-amino-acid chain: DNA ligase (831 aa).

NAD(+) contacts are provided by residues 34–38 (DADYD), 83–84 (SL), and Glu-114. Lys-116 (N6-AMP-lysine intermediate) is an active-site residue. Residues Arg-137, Glu-174, Lys-291, and Lys-315 each coordinate NAD(+). The Zn(2+) site is built by Cys-409, Cys-412, Cys-427, and Cys-433. Residues 749–831 (AHTAPLNGQS…LAFLEQYSAQ (83 aa)) form the BRCT domain.

Belongs to the NAD-dependent DNA ligase family. LigA subfamily. The cofactor is Mg(2+). It depends on Mn(2+) as a cofactor.

The enzyme catalyses NAD(+) + (deoxyribonucleotide)n-3'-hydroxyl + 5'-phospho-(deoxyribonucleotide)m = (deoxyribonucleotide)n+m + AMP + beta-nicotinamide D-nucleotide.. Functionally, DNA ligase that catalyzes the formation of phosphodiester linkages between 5'-phosphoryl and 3'-hydroxyl groups in double-stranded DNA using NAD as a coenzyme and as the energy source for the reaction. It is essential for DNA replication and repair of damaged DNA. The sequence is that of DNA ligase from Xylella fastidiosa (strain M23).